The chain runs to 145 residues: Large ribosomal subunit protein uL11 (145 aa).

Belongs to the universal ribosomal protein uL11 family. In terms of assembly, part of the ribosomal stalk of the 50S ribosomal subunit. Interacts with L10 and the large rRNA to form the base of the stalk. L10 forms an elongated spine to which L12 dimers bind in a sequential fashion forming a multimeric L10(L12)X complex. Post-translationally, one or more lysine residues are methylated.

Its function is as follows. Forms part of the ribosomal stalk which helps the ribosome interact with GTP-bound translation factors. The protein is Large ribosomal subunit protein uL11 of Francisella philomiragia subsp. philomiragia (strain ATCC 25017 / CCUG 19701 / FSC 153 / O#319-036).